The sequence spans 160 residues: Lipoprotein signal peptidase (160 aa).

3 consecutive transmembrane segments (helical) span residues 7–27, 61–81, and 91–111; these read VIYY…KWLV, GQFW…IIYI, and AGIG…DRVF. Residues Asp-117 and Asp-135 contribute to the active site. A helical transmembrane segment spans residues 133 to 153; it reads IADSALTVGVILLFIHMFFFA.

Belongs to the peptidase A8 family.

Its subcellular location is the cell membrane. It carries out the reaction Release of signal peptides from bacterial membrane prolipoproteins. Hydrolyzes -Xaa-Yaa-Zaa-|-(S,diacylglyceryl)Cys-, in which Xaa is hydrophobic (preferably Leu), and Yaa (Ala or Ser) and Zaa (Gly or Ala) have small, neutral side chains.. Its pathway is protein modification; lipoprotein biosynthesis (signal peptide cleavage). This protein specifically catalyzes the removal of signal peptides from prolipoproteins. The chain is Lipoprotein signal peptidase from Geobacillus thermodenitrificans (strain NG80-2).